The primary structure comprises 323 residues: Sphingolipid delta(4)-desaturase/C4-monooxygenase DES2 (323 aa).

The N-myristoyl glycine moiety is linked to residue glycine 2. Transmembrane regions (helical) follow at residues 45–65 and 68–88; these read WTVTAMVLAQLLACWLAQGLA and WLFFWAYAFGGCVNHSLTLAI. The short motif at 89-93 is the Histidine box-1 element; that stretch reads HDISH. Positions 95–99 are required for C4-hydroxylase activity; that stretch reads TAFGT. A Histidine box-2 motif is present at residues 128–132; the sequence is HVDHH. A helical membrane pass occupies residues 209-231; sequence MVYLLASSLLGLGLHPISGHFVA. The short motif at 259–263 is the Histidine box-3 element; the sequence is HMEHH.

It belongs to the fatty acid desaturase type 1 family. DEGS subfamily.

It is found in the endoplasmic reticulum membrane. The catalysed reaction is a dihydroceramide + 2 Fe(II)-[cytochrome b5] + O2 + 2 H(+) = a phytoceramide + 2 Fe(III)-[cytochrome b5] + H2O. The enzyme catalyses an N-acylsphinganine + 2 Fe(II)-[cytochrome b5] + O2 + 2 H(+) = an N-acylsphing-4-enine + 2 Fe(III)-[cytochrome b5] + 2 H2O. It carries out the reaction N-octanoylsphinganine + 2 Fe(II)-[cytochrome b5] + O2 + 2 H(+) = N-octanoyl-4-hydroxysphinganine + 2 Fe(III)-[cytochrome b5] + H2O. It catalyses the reaction an N-acylsphinganine + 2 Fe(II)-[cytochrome b5] + O2 + 2 H(+) = an N-acyl-(4R)-4-hydroxysphinganine + 2 Fe(III)-[cytochrome b5] + H2O. It functions in the pathway membrane lipid metabolism; sphingolipid biosynthesis. In terms of biological role, bifunctional enzyme which acts both as a sphingolipid delta(4)-desaturase and a sphingolipid C4-monooxygenase. The polypeptide is Sphingolipid delta(4)-desaturase/C4-monooxygenase DES2 (Bos taurus (Bovine)).